Reading from the N-terminus, the 209-residue chain is MTSGDDAVAAAAERARQTAARNIPVFDDLPLPSDTANLREGVDLDDALLALLPLIGVWRGEGEGRDAHGDYRFGQQIIVSHDGADYLNWEARSWRLDDGGDYDRRDLRETGFWRFVNDPNDPGESQAIELLLAHSSGYIELFYGRPLNQASWELVTDALARSKSGVLVGGAKRLYGIIEGGDLAYVEERVDADGGLVPHLSARLSRFVG.

The short motif at 56-62 (GVWRGEG) is the GXWXGXG element. Lysine 172 and histidine 199 together coordinate heme b.

It belongs to the nitrobindin family. In terms of assembly, homodimer. Heme b serves as cofactor.

The enzyme catalyses peroxynitrite = nitrate. It functions in the pathway nitrogen metabolism. Functionally, heme-binding protein able to scavenge peroxynitrite and to protect free L-tyrosine against peroxynitrite-mediated nitration, by acting as a peroxynitrite isomerase that converts peroxynitrite to nitrate. Therefore, this protein likely plays a role in peroxynitrite sensing and in the detoxification of reactive nitrogen and oxygen species (RNS and ROS, respectively). Is able to bind nitric oxide (NO) in vitro, but may act as a sensor of peroxynitrite levels in vivo. The protein is Peroxynitrite isomerase 2 of Mycolicibacterium gilvum (strain PYR-GCK) (Mycobacterium gilvum (strain PYR-GCK)).